A 154-amino-acid chain; its full sequence is Ribosome maturation factor RimP (154 aa).

Belongs to the RimP family.

Its subcellular location is the cytoplasm. Functionally, required for maturation of 30S ribosomal subunits. The chain is Ribosome maturation factor RimP from Prochlorococcus marinus (strain MIT 9313).